The following is a 570-amino-acid chain: Laccase-3 (570 aa).

A signal peptide spans M1–A25. Plastocyanin-like domains follow at residues V33–G149 and R159–A310. The N-linked (GlcNAc...) asparagine glycan is linked to N79. Cu cation-binding residues include H83, H85, H128, and H130. N188, N298, N332, N383, N393, and N433 each carry an N-linked (GlcNAc...) asparagine glycan. The 136-residue stretch at D419–R554 folds into the Plastocyanin-like 3 domain. 7 residues coordinate Cu cation: H471, H474, H476, H533, C534, H535, and H539.

The protein belongs to the multicopper oxidase family. It depends on Cu cation as a cofactor. Mostly expressed in roots and siliques.

Its subcellular location is the secreted. The protein localises to the extracellular space. It is found in the apoplast. It carries out the reaction 4 hydroquinone + O2 = 4 benzosemiquinone + 2 H2O. Its function is as follows. Lignin degradation and detoxification of lignin-derived products. The sequence is that of Laccase-3 (LAC3) from Arabidopsis thaliana (Mouse-ear cress).